A 214-amino-acid polypeptide reads, in one-letter code: MDRVSSLPDELLCHILSFLTTKETALTSLLSKREIIPLIKSVVFPTLIYASFLVQLVSKLVKLKIGSGIDLCWWTESIFLPMLKTLVLDSVEFCVARFEILFPACPALEELEMANIKVLDSDATVSSASLKTLKIDSSVGSGSFSFDTPNLVYLGYSDFVAEDYPLANFQNLFEARINLVVTKDQIERARAPNNGWLEDDEDDIALRLGIRKSS.

An F-box domain is found at 1 to 47 (MDRVSSLPDELLCHILSFLTTKETALTSLLSKREIIPLIKSVVFPTL).

This chain is Putative F-box protein At3g58910, found in Arabidopsis thaliana (Mouse-ear cress).